The following is a 571-amino-acid chain: Proline--tRNA ligase (571 aa).

Belongs to the class-II aminoacyl-tRNA synthetase family. ProS type 1 subfamily. Homodimer.

Its subcellular location is the cytoplasm. The enzyme catalyses tRNA(Pro) + L-proline + ATP = L-prolyl-tRNA(Pro) + AMP + diphosphate. Functionally, catalyzes the attachment of proline to tRNA(Pro) in a two-step reaction: proline is first activated by ATP to form Pro-AMP and then transferred to the acceptor end of tRNA(Pro). As ProRS can inadvertently accommodate and process non-cognate amino acids such as alanine and cysteine, to avoid such errors it has two additional distinct editing activities against alanine. One activity is designated as 'pretransfer' editing and involves the tRNA(Pro)-independent hydrolysis of activated Ala-AMP. The other activity is designated 'posttransfer' editing and involves deacylation of mischarged Ala-tRNA(Pro). The misacylated Cys-tRNA(Pro) is not edited by ProRS. This Psychromonas ingrahamii (strain DSM 17664 / CCUG 51855 / 37) protein is Proline--tRNA ligase.